The chain runs to 120 residues: MDDSKVVGGKVKKPGKRGRKPAKIDLKAKLERSRQSARECRARKKLRYQYLEELVSSRERAICALREELEMYKQWCMAMDQGKIPSEIKALLTGEEQSKSQQNSSRHMKAGKTDANSNSW.

The interval 1 to 24 (MDDSKVVGGKVKKPGKRGRKPAKI) is disordered. Residues 10–21 (KVKKPGKRGRKP) are compositionally biased toward basic residues. The 64-residue stretch at 23–86 (KIDLKAKLER…MAMDQGKIPS (64 aa)) folds into the bZIP domain. The basic motif stretch occupies residues 29–60 (KLERSRQSARECRARKKLRYQYLEELVSSRER). The leucine-zipper stretch occupies residues 62–69 (ICALREEL). Residues 93 to 120 (TGEEQSKSQQNSSRHMKAGKTDANSNSW) are disordered.

It belongs to the bZIP family. ATF subfamily. As to quaternary structure, interacts with CREB1; regulates CREB1 phosphorylation, stability and transcriptional activity. Interacts with immediate-early (IE) protein BICP22 of bovine herpesvirus-1 (BHV-1). In terms of processing, phosphorylated by AMPK.

The protein localises to the nucleus. Probable regulator of CREB1 transcriptional activity which is involved in adipose cells differentiation. May also play a regulatory role in the cell cycle. This Bos taurus (Bovine) protein is cAMP-responsive element-binding protein-like 2 (CREBL2).